Consider the following 1939-residue polypeptide: Myosin-2 (1939 aa).

A Myosin N-terminal SH3-like domain is found at 33 to 82; it reads DAKTSVFVAEPKESFVKGTIQSREGGKVTVKTEAGATLTVKEDQVFPMNP. 2 positions are modified to phosphothreonine: Thr64 and Thr69. One can recognise a Myosin motor domain in the interval 86-782; the sequence is DKIEDMAMMT…LLGLLEEMRD (697 aa). Residue Lys130 is modified to N6,N6,N6-trimethyllysine. 179–186 contacts ATP; sequence GESGAGKT. A Phosphotyrosine modification is found at Tyr389. Ser392 is modified (phosphoserine). Thr419 is subject to Phosphothreonine. Phosphoserine is present on Ser625. An actin-binding region spans residues 659–681; that stretch reads LNKLMTNLRSTHPHFVRCIIPNE. At His757 the chain carries Pros-methylhistidine. The interval 761-775 is actin-binding; it reads KFGHTKVFFKAGLLG. One can recognise an IQ domain in the interval 785-814; sequence LAQLITRTQARCRGFLARVEYQKMVERRES. Positions 843 to 1939 form a coiled coil; that stretch reads LLKSAESEKE…EVHTKVISEE (1097 aa). Ser1092 and Ser1096 each carry phosphoserine. 2 disordered regions span residues 1126–1147 and 1153–1172; these read IEAERASRAKAEKQRSDLSREL and RLEEAGGATSAQIEMNKKRE. Positions 1128–1147 are enriched in basic and acidic residues; that stretch reads AERASRAKAEKQRSDLSREL. Phosphoserine occurs at positions 1162 and 1237. A Phosphothreonine modification is found at Thr1241. Phosphoserine is present on Ser1243. Thr1255 is subject to Phosphothreonine. A Phosphoserine modification is found at Ser1261. Thr1286 is modified (phosphothreonine). A phosphoserine mark is found at Ser1288, Ser1292, Ser1303, and Ser1306. Tyr1464 is subject to Phosphotyrosine. Position 1467 is a phosphothreonine (Thr1467). Ser1474 carries the post-translational modification Phosphoserine. Tyr1492 is subject to Phosphotyrosine. At Ser1495 the chain carries Phosphoserine. At Thr1501 the chain carries Phosphothreonine. Position 1514 is a phosphoserine (Ser1514). Phosphothreonine is present on Thr1517. Phosphoserine is present on residues Ser1542, Ser1554, Ser1574, Ser1600, Ser1603, Ser1714, and Ser1726. Phosphothreonine is present on residues Thr1730 and Thr1736. The residue at position 1739 (Ser1739) is a Phosphoserine. The disordered stretch occupies residues 1885–1915; sequence QAEEAEEQSNTNLSKFRKLQHELEEAEERAD.

This sequence belongs to the TRAFAC class myosin-kinesin ATPase superfamily. Myosin family. Muscle myosin is a hexameric protein that consists of 2 heavy chain subunits (MHC), 2 alkali light chain subunits (MLC) and 2 regulatory light chain subunits (MLC-2). Interacts with GCSAM.

Its subcellular location is the cytoplasm. The protein resides in the myofibril. In terms of biological role, myosins are actin-based motor molecules with ATPase activity essential for muscle contraction. The polypeptide is Myosin-2 (MYH2) (Sus scrofa (Pig)).